The chain runs to 370 residues: DNA primase large subunit PriL (370 aa).

The [4Fe-4S] cluster site is built by cysteine 230, cysteine 301, cysteine 310, and cysteine 317. The segment at 337–370 (EGEEAQGKEQGKEKDDGKEKENGKESEVKKKKEK) is disordered.

This sequence belongs to the eukaryotic-type primase large subunit family. In terms of assembly, heterodimer of a small subunit (PriS) and a large subunit (PriL). [4Fe-4S] cluster is required as a cofactor.

Its function is as follows. Regulatory subunit of DNA primase, an RNA polymerase that catalyzes the synthesis of short RNA molecules used as primers for DNA polymerase during DNA replication. Stabilizes and modulates the activity of the small subunit, increasing the rate of DNA synthesis, and conferring RNA synthesis capability. The DNA polymerase activity may enable DNA primase to also catalyze primer extension after primer synthesis. May also play a role in DNA repair. This is DNA primase large subunit PriL from Methanosarcina mazei (strain ATCC BAA-159 / DSM 3647 / Goe1 / Go1 / JCM 11833 / OCM 88) (Methanosarcina frisia).